Consider the following 508-residue polypeptide: U4/U6 small nuclear ribonucleoprotein Prp31 (508 aa).

Residues 1–45 (MSLADELLADLEEAGEEDGLYPGGEEGESDGEPGERQVDGGLEDI) are disordered. The segment covering 7 to 32 (LLADLEEAGEEDGLYPGGEEGESDGE) has biased composition (acidic residues). 2 coiled-coil regions span residues 96–131 (EADP…KYSK) and 192–226 (DDEL…MSFI). One can recognise a Nop domain in the interval 226–344 (IAPNLSIIVG…IERKFDKWQE (119 aa)). 2 disordered regions span residues 345-368 (PPPV…RGGR) and 442-461 (QSMT…GTSS). The Nuclear localization signal (NLS) motif lies at 362 to 375 (RKKRGGRRYRKMKE).

This sequence belongs to the PRP31 family. As to quaternary structure, identified in the spliceosome B complex. Component of the U4/U6-U5 tri-snRNP complex. Component of some MLL1/MLL complex.

The protein resides in the nucleus. It localises to the nucleus speckle. It is found in the cajal body. Its function is as follows. Involved in pre-mRNA splicing as component of the spliceosome. Required for the assembly of the U4/U5/U6 tri-snRNP complex, one of the building blocks of the spliceosome. The protein is U4/U6 small nuclear ribonucleoprotein Prp31 (prpf31) of Danio rerio (Zebrafish).